The chain runs to 159 residues: Transcriptional repressor NrdR (159 aa).

The segment at 3–34 (CPTCQNTDSRVLESRSADTGKSVRRRRECLNC) is a zinc-finger region. One can recognise an ATP-cone domain in the interval 49 to 139 (ISVLKKDGSR…VYRKFNGVKD (91 aa)).

The protein belongs to the NrdR family. Zn(2+) is required as a cofactor.

Functionally, negatively regulates transcription of bacterial ribonucleotide reductase nrd genes and operons by binding to NrdR-boxes. The chain is Transcriptional repressor NrdR from Prochlorococcus marinus (strain MIT 9515).